The following is a 154-amino-acid chain: Protein FasC (154 aa).

It belongs to the periplasmic pilus chaperone family.

In terms of biological role, could be required for the biogenesis of a putative fimbria. This chain is Protein FasC (fasC), found in Escherichia coli.